A 403-amino-acid polypeptide reads, in one-letter code: Poly(rC)-binding protein 4 (403 aa).

KH domains follow at residues 17 to 67 (TLTL…TITG), 101 to 154 (PVTL…TVSG), and 241 to 293 (TSSQ…TITG).

It localises to the cytoplasm. Functionally, single-stranded nucleic acid binding protein that binds preferentially to oligo dC. The sequence is that of Poly(rC)-binding protein 4 (PCBP4) from Bos taurus (Bovine).